Here is an 88-residue protein sequence, read N- to C-terminus: RQC P-site tRNA stabilizing factor (88 aa).

The S4 RNA-binding domain occupies 1–60 (MRLDKYLKVSRIIKRRTVAKEVADKGRIKVNGILAKSSTDLKVNDQVEIRFGNKLLLVKV).

It belongs to the RqcP family. Associates with stalled 50S ribosomal subunits. Binds to RqcH, 23S rRNA and the P-site tRNA. Does not require RqcH for association with 50S subunits.

Its function is as follows. Key component of the ribosome quality control system (RQC), a ribosome-associated complex that mediates the extraction of incompletely synthesized nascent chains from stalled ribosomes and their subsequent degradation. RqcH recruits Ala-charged tRNA, and with RqcP directs the elongation of stalled nascent chains on 50S ribosomal subunits, leading to non-templated C-terminal alanine extensions (Ala tail). The Ala tail promotes nascent chain degradation. RqcP is associated with the translocation-like movement of the peptidyl-tRNA from the A-site into the P-site. In Streptococcus pneumoniae (strain ATCC BAA-255 / R6), this protein is RQC P-site tRNA stabilizing factor.